The primary structure comprises 85 residues: UPF0335 protein Plav_2034 (85 aa).

This sequence belongs to the UPF0335 family.

This chain is UPF0335 protein Plav_2034, found in Parvibaculum lavamentivorans (strain DS-1 / DSM 13023 / NCIMB 13966).